Here is a 443-residue protein sequence, read N- to C-terminus: ATP-dependent protease ATPase subunit HslU (443 aa).

Residues Ile-18 and 60 to 65 (GVGKTE) contribute to the ATP site. Positions 141 to 165 (DQWGQNEENDTDSSTRQSFRKKLRE) are disordered. Residues Asp-256, Glu-321, and Arg-393 each coordinate ATP.

The protein belongs to the ClpX chaperone family. HslU subfamily. In terms of assembly, a double ring-shaped homohexamer of HslV is capped on each side by a ring-shaped HslU homohexamer. The assembly of the HslU/HslV complex is dependent on binding of ATP.

The protein localises to the cytoplasm. ATPase subunit of a proteasome-like degradation complex; this subunit has chaperone activity. The binding of ATP and its subsequent hydrolysis by HslU are essential for unfolding of protein substrates subsequently hydrolyzed by HslV. HslU recognizes the N-terminal part of its protein substrates and unfolds these before they are guided to HslV for hydrolysis. The protein is ATP-dependent protease ATPase subunit HslU of Photobacterium profundum (strain SS9).